We begin with the raw amino-acid sequence, 280 residues long: Probable cell division protein WhiA (280 aa).

A DNA-binding region (H-T-H motif) is located at residues 247-279 (SLEQIANFFFTKYNIKISRSGIQHFSVNLKKLC).

This sequence belongs to the WhiA family.

Functionally, involved in cell division and chromosome segregation. The polypeptide is Probable cell division protein WhiA (Mycoplasma genitalium (strain ATCC 33530 / DSM 19775 / NCTC 10195 / G37) (Mycoplasmoides genitalium)).